Reading from the N-terminus, the 483-residue chain is Putative (R)-citramalate synthase CimA (483 aa).

In terms of domain architecture, Pyruvate carboxyltransferase spans 1–245; sequence MRDGEQTPGV…DTGIKHEQIY (245 aa).

The protein belongs to the alpha-IPM synthase/homocitrate synthase family. As to quaternary structure, homodimer.

It carries out the reaction pyruvate + acetyl-CoA + H2O = (3R)-citramalate + CoA + H(+). It participates in amino-acid biosynthesis; L-isoleucine biosynthesis; 2-oxobutanoate from pyruvate: step 1/3. In terms of biological role, catalyzes the condensation of pyruvate and acetyl-coenzyme A to form (R)-citramalate. This Methanosarcina acetivorans (strain ATCC 35395 / DSM 2834 / JCM 12185 / C2A) protein is Putative (R)-citramalate synthase CimA.